A 762-amino-acid polypeptide reads, in one-letter code: Pyrophosphate-energized vacuolar membrane proton pump (762 aa).

Residues 1–6 lie on the Intravacuolar side of the membrane; it reads MAILGE. Residues 7 to 33 traverse the membrane as a helical segment; that stretch reads LGTEILIPVCGVIGIVFAVAQWFIVSK. The Cytoplasmic portion of the chain corresponds to 34–81; that stretch reads VKVTPGAASAAAGAKNGYGDYLIEEEEGLNDHNVVVKCAEIQTAISEG. A helical membrane pass occupies residues 82–111; sequence ATSFLFTMYQYVGMFMVVFAAIIFLFLGSI. Over 112 to 131 the chain is Intravacuolar; that stretch reads EGFSTKGQPCTYSKGTCKPA. Cys-121 and Cys-128 are oxidised to a cystine. A helical transmembrane segment spans residues 132–159; sequence LYTALFSTASFLLGAITSLVSGFLGMKI. At 160 to 182 the chain is on the cytoplasmic side; that stretch reads ATYANARTTLEARKGVGKAFITA. A helical membrane pass occupies residues 183 to 212; it reads FRSGAVMGFLLSSSGLVVLYITINVFKMYY. Residues 213–215 lie on the Intravacuolar side of the membrane; the sequence is GDD. Residues 216-244 traverse the membrane as a helical segment; it reads WEGLFESITGYGLGGSSMALFGRVGGGIY. Residues 245–282 lie on the Cytoplasmic side of the membrane; the sequence is TKAADVGADLVGKVERNIPEDDPRNPAVIADNVGDNVG. Residue Lys-246 coordinates substrate. Asp-249, Asp-253, and Asp-279 together coordinate Mg(2+). A helical membrane pass occupies residues 283 to 308; the sequence is DIAGMGSDLFGSYAESSCAALVVASI. The Intravacuolar portion of the chain corresponds to 309 to 316; that stretch reads SSFGINHD. The helical transmembrane segment at 317 to 342 threads the bilayer; the sequence is FTAMCYPLLVSSVGIIVCLLTTLFAT. Residues 343-350 lie on the Cytoplasmic side of the membrane; it reads DFFEIKAA. Residues 351–378 form a helical membrane-spanning segment; that stretch reads NEIEPALKKQLIISTALMTVGVAVISWL. Residues 379-397 are Intravacuolar-facing; that stretch reads ALPAKFTIFNFGAQKEVSN. A helical transmembrane segment spans residues 398 to 421; it reads WGLFFCVAVGLWAGLIIGFVTEYY. Residues 422 to 443 are Cytoplasmic-facing; that stretch reads TSNAYSPVQDVADSCRTGAATN. The chain crosses the membrane as a helical span at residues 444–468; the sequence is VIFGLALGYKSVIIPIFAIAVSIYV. The Intravacuolar portion of the chain corresponds to 469 to 474; the sequence is SFSIAA. The helical transmembrane segment at 475 to 501 threads the bilayer; it reads MYGIAMAALGMLSTMATGLAIDAYGPI. Residues 502–530 lie on the Cytoplasmic side of the membrane; sequence SDNAGGIAEMAGMSHRIRERTDALDAAGN. Mg(2+) contacts are provided by Asp-503 and Asn-530. The helical transmembrane segment at 531-559 threads the bilayer; it reads TTAAIGKGFAIGSAALVSLALFGAFVSRA. Residues 560–569 lie on the Intravacuolar side of the membrane; sequence GVKVVDVLSP. Residues 570–598 traverse the membrane as a helical segment; that stretch reads KVFIGLIVGAMLPYWFSAMTMKSVGSAAL. The Cytoplasmic segment spans residues 599–627; the sequence is KMVEEVRRQFNTIPGLMEGTAKPDYATCV. A helical membrane pass occupies residues 628–656; that stretch reads KISTDASIKEMIPPGALVMLTPLIVGTLF. Position 657 (Gly-657) is a topological domain, intravacuolar. The helical transmembrane segment at 658-685 threads the bilayer; the sequence is VETLSGVLAGALVSGVQIAISASNTGGA. Topologically, residues 686-728 are cytoplasmic; the sequence is WDNAKKYIEAGNSEHARSLGPKGSDCHKAAVIGDTIGDPLKDT. Positions 687 and 723 each coordinate Mg(2+). Lys-726 is a substrate binding site. Residues 729-754 traverse the membrane as a helical segment; the sequence is SGPSLNILIKLMAVESLVFAPFFATY. The Intravacuolar portion of the chain corresponds to 755 to 762; sequence GGLLFKYI.

This sequence belongs to the H(+)-translocating pyrophosphatase (TC 3.A.10) family. K(+)-stimulated subfamily. In terms of assembly, monomer.

Its subcellular location is the vacuole membrane. It carries out the reaction diphosphate + H2O + H(+)(in) = 2 phosphate + 2 H(+)(out). Its function is as follows. Contributes to the transtonoplast (from cytosol to vacuole lumen) H(+)-electrochemical potential difference. It establishes a proton gradient of similar and often greater magnitude than the H(+)-ATPase on the same membrane. The sequence is that of Pyrophosphate-energized vacuolar membrane proton pump from Hordeum vulgare (Barley).